Reading from the N-terminus, the 368-residue chain is uncharacterized protein (368 aa).

This is an uncharacterized protein from Archaeoglobus fulgidus (strain ATCC 49558 / DSM 4304 / JCM 9628 / NBRC 100126 / VC-16).